A 435-amino-acid chain; its full sequence is Serine--tRNA ligase (435 aa).

Residue 241–243 (TAE) participates in L-serine binding. Position 272 to 274 (272 to 274 (RSE)) interacts with ATP. Glutamate 295 provides a ligand contact to L-serine. Residue 359 to 362 (EISS) coordinates ATP. Serine 395 provides a ligand contact to L-serine.

This sequence belongs to the class-II aminoacyl-tRNA synthetase family. Type-1 seryl-tRNA synthetase subfamily. In terms of assembly, homodimer. The tRNA molecule binds across the dimer.

Its subcellular location is the cytoplasm. The enzyme catalyses tRNA(Ser) + L-serine + ATP = L-seryl-tRNA(Ser) + AMP + diphosphate + H(+). It catalyses the reaction tRNA(Sec) + L-serine + ATP = L-seryl-tRNA(Sec) + AMP + diphosphate + H(+). It participates in aminoacyl-tRNA biosynthesis; selenocysteinyl-tRNA(Sec) biosynthesis; L-seryl-tRNA(Sec) from L-serine and tRNA(Sec): step 1/1. In terms of biological role, catalyzes the attachment of serine to tRNA(Ser). Is also able to aminoacylate tRNA(Sec) with serine, to form the misacylated tRNA L-seryl-tRNA(Sec), which will be further converted into selenocysteinyl-tRNA(Sec). The polypeptide is Serine--tRNA ligase (Actinobacillus pleuropneumoniae serotype 7 (strain AP76)).